The following is a 139-amino-acid chain: Histone H3.3 type a (139 aa).

The disordered stretch occupies residues 1-43; that stretch reads MARTKQTARKSTGAKVPRKHIGSKQAHKQTPVSSSSGGVKKVH. Lys5 carries the post-translational modification N6,N6,N6-trimethyllysine; by set1; alternate. Lys5 bears the N6,N6-dimethyllysine; by set1; alternate mark. N6-acetyllysine; alternate occurs at positions 5 and 10. An N6-methyllysine; by set1; alternate modification is found at Lys5. Position 10 is an N6,N6,N6-trimethyllysine; alternate (Lys10). At Lys10 the chain carries N6,N6-dimethyllysine; alternate. The residue at position 10 (Lys10) is an N6-methyllysine; alternate. Ser11 carries the phosphoserine modification. Lys15 is modified (N6-acetyllysine). The span at 16–27 shows a compositional bias: basic residues; the sequence is VPRKHIGSKQAH. Residues Lys19, Lys24, Lys28, and Lys40 each carry the N6-acetyllysine; alternate modification. Lys19, Lys24, Lys28, and Lys40 each carry N6-methyllysine; alternate. 2 positions are modified to N6,N6,N6-trimethyllysine; alternate: Lys28 and Lys40. N6,N6-dimethyllysine; alternate occurs at positions 28 and 40. Lys60 carries the N6-acetyllysine modification. At Lys83 the chain carries N6,N6,N6-trimethyllysine; alternate. Residue Lys83 is modified to N6,N6-dimethyllysine; alternate. Lys83 carries the post-translational modification N6-methyllysine; alternate.

It belongs to the histone H3 family. As to quaternary structure, the nucleosome is a histone octamer containing two molecules each of H2A, H2B, H3 and H4 assembled in one H3-H4 heterotetramer and two H2A-H2B heterodimers. The octamer wraps approximately 147 bp of DNA. Post-translationally, acetylation is generally linked to gene activation. Different methylation states of H3K4 mark distinct developmental phases. H3K4me2 is associated with euchromatic regions. H3K4me3 is a mark of active chromatin. set1 is responsible for all mono-, di- and tri-methylation of H3K4. H3K4me facilitates subsequent acetylation of H3 and H4. Methylation at H3K9 and H3K27 are linked to gene repression. In terms of processing, H3S10ph, which is linked to gene activation, prevents methylation at H3K9 but facilitates acetylation of H3 and H4.

The protein localises to the nucleus. It localises to the chromosome. Functionally, core component of nucleosome. Nucleosomes wrap and compact DNA into chromatin, limiting DNA accessibility to the cellular machineries which require DNA as a template. Histones thereby play a central role in transcription regulation, DNA repair, DNA replication and chromosomal stability. DNA accessibility is regulated via a complex set of post-translational modifications of histones, also called histone code, and nucleosome remodeling. This chain is Histone H3.3 type a (H3a), found in Dictyostelium discoideum (Social amoeba).